Here is a 368-residue protein sequence, read N- to C-terminus: DNA replication and repair protein RecF (368 aa).

ATP is bound at residue 30–37 (GDNGAGKT).

The protein belongs to the RecF family.

The protein resides in the cytoplasm. The RecF protein is involved in DNA metabolism; it is required for DNA replication and normal SOS inducibility. RecF binds preferentially to single-stranded, linear DNA. It also seems to bind ATP. This chain is DNA replication and repair protein RecF, found in Xanthomonas campestris pv. campestris (strain 8004).